The sequence spans 465 residues: Asparagine--tRNA ligase (465 aa).

The protein belongs to the class-II aminoacyl-tRNA synthetase family. Homodimer.

The protein localises to the cytoplasm. It catalyses the reaction tRNA(Asn) + L-asparagine + ATP = L-asparaginyl-tRNA(Asn) + AMP + diphosphate + H(+). This chain is Asparagine--tRNA ligase, found in Pseudoalteromonas atlantica (strain T6c / ATCC BAA-1087).